The following is a 241-amino-acid chain: Probable 2-phosphosulfolactate phosphatase (241 aa).

The protein belongs to the ComB family. Mg(2+) is required as a cofactor.

The catalysed reaction is (2R)-O-phospho-3-sulfolactate + H2O = (2R)-3-sulfolactate + phosphate. In Gloeothece citriformis (strain PCC 7424) (Cyanothece sp. (strain PCC 7424)), this protein is Probable 2-phosphosulfolactate phosphatase.